The chain runs to 439 residues: Adenylosuccinate synthetase (439 aa).

GTP-binding positions include 13 to 19 (GDEGKGK) and 41 to 43 (GHT). The active-site Proton acceptor is Asp-14. 2 residues coordinate Mg(2+): Asp-14 and Gly-41. Residues 14-17 (DEGK), 39-42 (NAGH), Thr-130, Arg-144, Gln-226, Thr-241, and Arg-313 each bind IMP. His-42 functions as the Proton donor in the catalytic mechanism. 309 to 315 (ASTGRQR) contributes to the substrate binding site. GTP contacts are provided by residues Arg-315, 341–343 (KLD), and 422–424 (STG).

This sequence belongs to the adenylosuccinate synthetase family. As to quaternary structure, homodimer. Mg(2+) serves as cofactor.

The protein localises to the cytoplasm. It catalyses the reaction IMP + L-aspartate + GTP = N(6)-(1,2-dicarboxyethyl)-AMP + GDP + phosphate + 2 H(+). The protein operates within purine metabolism; AMP biosynthesis via de novo pathway; AMP from IMP: step 1/2. Plays an important role in the de novo pathway of purine nucleotide biosynthesis. Catalyzes the first committed step in the biosynthesis of AMP from IMP. In Acinetobacter baylyi (strain ATCC 33305 / BD413 / ADP1), this protein is Adenylosuccinate synthetase.